The primary structure comprises 314 residues: Pectin lyase (314 aa).

Arg-202 is a catalytic residue.

It belongs to the polysaccharide lyase 1 family.

It carries out the reaction Eliminative cleavage of (1-&gt;4)-alpha-D-galacturonan methyl ester to give oligosaccharides with 4-deoxy-6-O-methyl-alpha-D-galact-4-enuronosyl groups at their non-reducing ends.. The sequence is that of Pectin lyase (pnl) from Pectobacterium carotovorum (Erwinia carotovora).